The primary structure comprises 982 residues: E3 ubiquitin-protein ligase CBL-B (982 aa).

The span at 1–14 (MASSSSSSSSTNSS) shows a compositional bias: low complexity. The tract at residues 1–25 (MASSSSSSSSTNSSAVTGRLPGARS) is disordered. The tract at residues 46–178 (PPKQAAADRR…KAIFPSGQFQ (133 aa)) is 4H. In terms of domain architecture, Cbl-PTB spans 46 to 354 (PPKQAAADRR…GRSYNPDLTD (309 aa)). The EF-hand-like stretch occupies residues 179 to 251 (GDNFRITKAD…FEFDIFTRLF (73 aa)). Residues D232, T234, N236, Y238, and E243 each contribute to the Ca(2+) site. The interval 252–354 (QPWTSILRNW…GRSYNPDLTD (103 aa)) is SH2-like. R297 provides a ligand contact to 4-O-phospho-L-tyrosine. The tract at residues 355 to 383 (LCEPTPHDHIKVTQEQYELYCEMGSTFQL) is linker. An RING-type zinc finger spans residues 384–423 (CKICAENDKDVKIEPCGHLMCTSCLTSWQESDGQGCPFCR). Disordered stretches follow at residues 480 to 582 (MNER…RTCR), 709 to 728 (VRNSAEEDDSEYKIPSSHPV), and 766 to 911 (LKQP…PVPR). A compositionally biased stretch (polar residues) spans 483 to 497 (RQNSPVTSPGSSPLS). Residues 554–576 (LPAPPPPLREPPPPPERPPPIPP) are compositionally biased toward pro residues. Residues 825-834 (PSQPPPPPPA) are compositionally biased toward pro residues. A UBA domain is found at 927–970 (SLAENVDAKIAKLMGEGFPFEEVKRALEIAQNNVDVARSILREF).

In terms of assembly, interacts with several SH3 domain-containing proteins and with poly-ubiquitinated proteins.

It is found in the cytoplasm. It catalyses the reaction S-ubiquitinyl-[E2 ubiquitin-conjugating enzyme]-L-cysteine + [acceptor protein]-L-lysine = [E2 ubiquitin-conjugating enzyme]-L-cysteine + N(6)-ubiquitinyl-[acceptor protein]-L-lysine.. Its pathway is protein modification; protein ubiquitination. Its function is as follows. E3 ubiquitin-protein ligase which accepts ubiquitin from specific E2 ubiquitin-conjugating enzymes, and transfers it to substrates, generally promoting their degradation by the proteasome. This chain is E3 ubiquitin-protein ligase CBL-B (cblb), found in Xenopus tropicalis (Western clawed frog).